We begin with the raw amino-acid sequence, 806 residues long: MSKLTTGSFSIEDLESVQITINNIVGAAKEAAEEKAKELVNAGPTLFAGLESYRDDWNFKLLDRYEPVITPMCDQCCYCTYGPCDLSGNKRGACGIDMLGHNGREFFLRVITGTACHAAHGRHLLDHLIETFGEDLPLNLGQSNVLTPNITISTGLSPKTLGEVKPAMEYVEEQLTQLLATVHAGQESAEIDYDSKALFSGSLDHVGMEISDIVQVTAYDFPRADPEAPLIEIGMGTIDKSKPFLCVIGHNVAGVTYMMDYMEDHDLTDKMEIAGLCCTAIDLTRYKEADRRPPYAKVIGSMSKELKVIRSGMPDVIVVDEQCVRGDIVPEAQKLMIPVIASNPKIMYGLPNRTDADVDETIEELRSGKIPGCVMLDYDKLGEICIRLTMEMAPIRDASGITAIPTDEEFTNWVMKCADCGACMIACPEELDIPEAMGFAKEGDYSYLDILHDQCIGCRRCEQVCKKEIPILNIIEKAAQKQISEEKGLMRAGRGQVSDAEIRAEGLNLVMGTTPGIIAIIGCPNYPEGTKDVYYIAEEFLKRNFIVVTTGCGAMDIGMFKDEDGKTLYERFPGGFECGGLANIGSCVSNAHITGAAEKVAAIFAQRTLEGNLAEIGDYVLNRVGACGLAWGAFSQKASSIGTGCNILGIPAVLGPHSSKYRRALIAKNYEEDKWKVYDARNGQEMAIPPAPEFLLTTAETWQEAIPMMAKACIRPSDNNMGRSIKLTHWMELHKKYLGSKPEDWWKFVRNEADLPLATREALLKELEKEHGWEIDWKRKKVISGPKIKFDVSAQPTNLKRLCKEA.

6 residues coordinate [4Fe-4S] cluster: Cys73, Cys76, Cys77, Cys79, Cys84, and Cys94. Residue His117 participates in CO binding. [Ni-4Fe-4S] cluster contacts are provided by His250, Cys278, and Cys323. 2 consecutive 4Fe-4S ferredoxin-type domains span residues 407-436 (DEEF…IPEA) and 446-475 (SYLD…LNII). Residues Cys417, Cys420, Cys423, Cys427, Cys455, Cys458, Cys461, and Cys465 each coordinate [4Fe-4S] cluster. [Ni-4Fe-4S] cluster contacts are provided by Cys523, Cys552, and Cys587.

It belongs to the Ni-containing carbon monoxide dehydrogenase family. In terms of assembly, heterotetramer of two alpha and two epsilon subunits. The ACDS complex is made up of alpha, epsilon, beta, gamma and delta subunits with a probable stoichiometry of (alpha(2)epsilon(2))(4)-beta(8)-(gamma(1)delta(1))(8). Requires [4Fe-4S] cluster as cofactor. It depends on [Ni-4Fe-4S] cluster as a cofactor.

The catalysed reaction is CO + 2 oxidized [2Fe-2S]-[ferredoxin] + H2O = 2 reduced [2Fe-2S]-[ferredoxin] + CO2 + 2 H(+). The protein operates within one-carbon metabolism; methanogenesis from acetate. With respect to regulation, carbon monoxide dehydrogenase activity is inhibited by KCN and is rapidly inactivated by O(2). Functionally, part of the ACDS complex that catalyzes the reversible cleavage of acetyl-CoA, allowing growth on acetate as sole source of carbon and energy. The alpha-epsilon subcomponent functions as a carbon monoxide dehydrogenase. This chain is Acetyl-CoA decarbonylase/synthase complex subunit alpha 1, found in Methanosarcina barkeri (strain Fusaro / DSM 804).